A 189-amino-acid polypeptide reads, in one-letter code: Peptidyl-tRNA hydrolase (189 aa).

Tyr14 is a tRNA binding site. The Proton acceptor role is filled by His19. The tRNA site is built by Phe64, Asn66, and Asn112.

This sequence belongs to the PTH family. In terms of assembly, monomer.

Its subcellular location is the cytoplasm. It carries out the reaction an N-acyl-L-alpha-aminoacyl-tRNA + H2O = an N-acyl-L-amino acid + a tRNA + H(+). Its function is as follows. Hydrolyzes ribosome-free peptidyl-tRNAs (with 1 or more amino acids incorporated), which drop off the ribosome during protein synthesis, or as a result of ribosome stalling. Functionally, catalyzes the release of premature peptidyl moieties from peptidyl-tRNA molecules trapped in stalled 50S ribosomal subunits, and thus maintains levels of free tRNAs and 50S ribosomes. This chain is Peptidyl-tRNA hydrolase, found in Rhizorhabdus wittichii (strain DSM 6014 / CCUG 31198 / JCM 15750 / NBRC 105917 / EY 4224 / RW1) (Sphingomonas wittichii).